The primary structure comprises 1320 residues: Clustered mitochondria protein homolog (1320 aa).

Disordered regions lie at residues 166 to 241 (QQLE…KQKM), 552 to 582 (YGSM…TKSI), and 683 to 708 (LKEK…EDVQ). The segment covering 185-194 (TEDKEEKETI) has biased composition (basic and acidic residues). Basic residues predominate over residues 202–213 (KKNKHHNKKGNK). 3 stretches are compositionally biased toward basic and acidic residues: residues 226 to 241 (NEEK…KQKM), 565 to 575 (QQQKEENEENK), and 683 to 695 (LKEK…KEGI). The region spanning 379–649 (KTNRYDINKG…KATPRDPNYT (271 aa)) is the Clu domain. TPR repeat units lie at residues 955 to 988 (GLDL…YHQV), 997 to 1030 (GACF…TEKT), 1039 to 1072 (VQAY…TDLL), 1081 to 1114 (ASIY…QEFL), and 1123 to 1156 (STTY…LEKE). The interval 1204–1320 (KADQFKKSQP…SKPNKKSSKN (117 aa)) is disordered. Residues 1237–1247 (KPKKSQSKKSK) are compositionally biased toward basic residues. A compositionally biased stretch (low complexity) spans 1248-1311 (STNTTTTTNT…PTSSSAADSS (64 aa)).

It belongs to the CLU family.

Its subcellular location is the cytoplasm. Its function is as follows. mRNA-binding protein involved in proper cytoplasmic distribution of mitochondria. This chain is Clustered mitochondria protein homolog, found in Dictyostelium discoideum (Social amoeba).